The following is a 237-amino-acid chain: Protein ULTRAPETALA 1 (237 aa).

The SAND domain maps to 18-116; the sequence is EELQEMSGVN…SKTVLLKYYN (99 aa). The CW-type zinc-finger motif lies at 133-191; it reads VCHRDEFVGCNDCGKERRFRLRSRDECRLHHNAMGDPNWKCSDFPYDKITCEEEEERGS.

As to quaternary structure, interacts with HHO5. Associates with ATX1 for trimethylating 'Lys-4' on histone H3 (H3K4me3) at flower MADS box gene loci. Expressed at low levels in seedlings, roots, shoots, leaves, stems, inflorescences, pollen, flowers and siliques, with highest levels dividing tissues including inflorescence.

The protein localises to the cytoplasm. Its subcellular location is the nucleus. Its function is as follows. Putative transcription factor that acts as a key negative regulator of cell accumulation in shoot and floral meristems. Negatively regulates the size of the WUSCHEL (WUS)-expressing organizing center in inflorescence meristems. May act by down-regulating expression of WUS. Acts as an antirepressor that counteracts EMF1 action through modulation of trimethylated 'Lys-4' on histone H3 (H3K4me3) marks on target gene loci (including genes involved in salt stress response and flower development). Collaboratively with RBL and CYP40/SQN, influences floral meristem (FM) determinacy in an AGAMOUS and SUPERMAN-dependent manner, thus contributing to the floral developmental homeostasis. The sequence is that of Protein ULTRAPETALA 1 from Arabidopsis thaliana (Mouse-ear cress).